Consider the following 551-residue polypeptide: ATP-dependent RNA helicase MRH4, mitochondrial (551 aa).

The transit peptide at 1–13 directs the protein to the mitochondrion; the sequence is MPPNLTPRSFNRD. A Q motif motif is present at residues 43–73; that stretch reads RTFDDFGLEEGLVKSLKGLYGEDGKTTPIET. Positions 85-293 constitute a Helicase ATP-binding domain; it reads ASAPIGSQRV…TTNPFFTKKE (209 aa). 98-105 contacts ATP; it reads AETGSGKT. Positions 242–245 match the DEAD box motif; the sequence is DEAD. In terms of domain architecture, Helicase C-terminal spans 334 to 551; sequence TLAEDAKAAK…VGAMGKRVRT (218 aa). The tract at residues 504–527 is disordered; that stretch reads LGEGAKNNKGGKGQGPLKKDGKTA.

The protein belongs to the DEAD box helicase family. MRH4 subfamily.

It localises to the mitochondrion. It carries out the reaction ATP + H2O = ADP + phosphate + H(+). Its function is as follows. ATP-binding RNA helicase involved in mitochondrial RNA metabolism. Required for maintenance of mitochondrial DNA. The chain is ATP-dependent RNA helicase MRH4, mitochondrial (MRH4) from Cryptococcus neoformans var. neoformans serotype D (strain B-3501A) (Filobasidiella neoformans).